The chain runs to 247 residues: Carboxy-S-adenosyl-L-methionine synthase (247 aa).

S-adenosyl-L-methionine contacts are provided by residues Y39, 64–66 (GCS), 89–90 (DN), 117–118 (DI), N132, and R199.

It belongs to the class I-like SAM-binding methyltransferase superfamily. Cx-SAM synthase family. In terms of assembly, homodimer.

It carries out the reaction prephenate + S-adenosyl-L-methionine = carboxy-S-adenosyl-L-methionine + 3-phenylpyruvate + H2O. Functionally, catalyzes the conversion of S-adenosyl-L-methionine (SAM) to carboxy-S-adenosyl-L-methionine (Cx-SAM). This Escherichia fergusonii (strain ATCC 35469 / DSM 13698 / CCUG 18766 / IAM 14443 / JCM 21226 / LMG 7866 / NBRC 102419 / NCTC 12128 / CDC 0568-73) protein is Carboxy-S-adenosyl-L-methionine synthase.